Here is a 379-residue protein sequence, read N- to C-terminus: Polycomb group protein FIE2 (379 aa).

WD repeat units lie at residues 85-128 (DKDE…LAKS), 131-171 (GHGD…CILI), 177-217 (GHRN…LYVD), 243-280 (VHSN…QSPG), 292-333 (VPEC…PVLI), and 340-378 (QCKS…PSSR).

The protein belongs to the WD repeat ESC family. As to expression, widely expressed. Expressed in the embryo sac before pollination. After pollination, its expression persists, predominantly in the embryo and at lower levels in the endosperm.

The protein localises to the nucleus. Polycomb group (PcG) protein. PcG proteins act by forming multiprotein complexes, which are required to maintain the transcriptionally repressive state of homeotic genes throughout development. PcG proteins are not required to initiate repression, but to maintain it during later stages of development. They probably act via the methylation of histones, rendering chromatin heritably changed in its expressibility. The protein is Polycomb group protein FIE2 (FIE2) of Zea mays (Maize).